We begin with the raw amino-acid sequence, 583 residues long: Hyaluronan synthase-related protein (583 aa).

The Cytoplasmic segment spans residues 1–29 (MENTTDPENIPVSKPKYPTIRRILSQTFR). The chain crosses the membrane as a helical span at residues 30-50 (ILLLFSITTAYVLGYQALCHQ). Topologically, residues 51-52 (GL) are extracellular. A helical membrane pass occupies residues 53–73 (LITFGLYGAAMLLHLLMQGIF). The Cytoplasmic segment spans residues 74–393 (ANLEIRRIEK…CNAQWWHQHH (320 aa)). A helical membrane pass occupies residues 394–414 (IWMTYESATGIFFPFFVTAVL). At 415 to 425 (IRLMYSSSLCN) the chain is on the extracellular side. Residues 426–446 (IVWLFLCIQIMSLLLSLYASW) traverse the membrane as a helical segment. Residues 447–457 (QSKKLSMVLMS) lie on the Cytoplasmic side of the membrane. A helical membrane pass occupies residues 458–478 (LYSTLYIIWLLPCQLVALLTI). Residues 479–497 (AKSDWGTSGRKKVVNNYVP) lie on the Extracellular side of the membrane. The helical transmembrane segment at 498–518 (LFSLSIWAAVLLGGLCYSMYI) threads the bilayer. At 519–535 (GCRKDWSKPQANRELYH) the chain is on the cytoplasmic side. The chain crosses the membrane as a helical span at residues 536-556 (LLYGCAGYMAYWVLMTVIYCV). The Extracellular portion of the chain corresponds to 557 to 583 (SGSCCKMRSQAVPQTHDITSLSVSLLV).

It belongs to the NodC/HAS family.

The protein resides in the membrane. The sequence is that of Hyaluronan synthase-related protein (has-rs) from Xenopus laevis (African clawed frog).